A 534-amino-acid polypeptide reads, in one-letter code: uncharacterized protein (534 aa).

4 disordered regions span residues 1-93 (MSSS…DDTG), 123-260 (SPES…LSSA), 313-349 (AAATGRLPRPSPRRKRVQEKKSLGGVSKPALGRTFPS), and 383-505 (PWGA…QGCP). Over residues 35-45 (GPGPDPGPEPG) the composition is skewed to pro residues. Phosphoserine occurs at positions 87 and 123. A compositionally biased stretch (low complexity) spans 145 to 161 (RGAAAQRCGEAARAEAG). Residues 230–239 (SPKDPRDTPR) show a composition bias toward basic and acidic residues.

This is an uncharacterized protein from Bos taurus (Bovine).